Consider the following 428-residue polypeptide: Chaperone SurA (428 aa).

The N-terminal stretch at 1–13 is a signal peptide; that stretch reads MLGALLLSGAVHA. 2 consecutive PpiC domains span residues 164-265 and 276-375; these read SEEF…KLLE and RDEV…EVLG. A disordered region spans residues 211 to 230; sequence TSSSSENALEGGDMGWRKAA.

The protein localises to the periplasm. The enzyme catalyses [protein]-peptidylproline (omega=180) = [protein]-peptidylproline (omega=0). Functionally, chaperone involved in the correct folding and assembly of outer membrane proteins. Recognizes specific patterns of aromatic residues and the orientation of their side chains, which are found more frequently in integral outer membrane proteins. May act in both early periplasmic and late outer membrane-associated steps of protein maturation. The protein is Chaperone SurA of Pseudomonas syringae pv. syringae (strain B728a).